Consider the following 257-residue polypeptide: Imidazole glycerol phosphate synthase subunit HisF (257 aa).

Catalysis depends on residues Asp12 and Asp131.

Belongs to the HisA/HisF family. In terms of assembly, heterodimer of HisH and HisF.

Its subcellular location is the cytoplasm. The catalysed reaction is 5-[(5-phospho-1-deoxy-D-ribulos-1-ylimino)methylamino]-1-(5-phospho-beta-D-ribosyl)imidazole-4-carboxamide + L-glutamine = D-erythro-1-(imidazol-4-yl)glycerol 3-phosphate + 5-amino-1-(5-phospho-beta-D-ribosyl)imidazole-4-carboxamide + L-glutamate + H(+). It participates in amino-acid biosynthesis; L-histidine biosynthesis; L-histidine from 5-phospho-alpha-D-ribose 1-diphosphate: step 5/9. In terms of biological role, IGPS catalyzes the conversion of PRFAR and glutamine to IGP, AICAR and glutamate. The HisF subunit catalyzes the cyclization activity that produces IGP and AICAR from PRFAR using the ammonia provided by the HisH subunit. The chain is Imidazole glycerol phosphate synthase subunit HisF from Mycobacteroides abscessus (strain ATCC 19977 / DSM 44196 / CCUG 20993 / CIP 104536 / JCM 13569 / NCTC 13031 / TMC 1543 / L948) (Mycobacterium abscessus).